The primary structure comprises 149 residues: MHCPFCDTEETKVIDSRLVSDGYQVRRRRECGHCHERFTTFEMAELIIPKIIKTDGTREPFNEDKLRSGIQHALEKRPVSADDVEKAINHIILQLRATGEREVPSKLVGKLAMNELKKLDKVAYIRFASVYLSFDDIDQFTIEIEKLKD.

A zinc finger spans residues C3–C34. Residues P49–Q139 form the ATP-cone domain.

It belongs to the NrdR family. The cofactor is Zn(2+).

In terms of biological role, negatively regulates transcription of bacterial ribonucleotide reductase nrd genes and operons by binding to NrdR-boxes. This is Transcriptional repressor NrdR from Haemophilus influenzae (strain 86-028NP).